A 529-amino-acid polypeptide reads, in one-letter code: Membrane-bound lytic murein transglycosylase F (529 aa).

The signal sequence occupies residues 1–27 (MPIFNLHQLRNFLFIIATTLFLSACQI). Residues 28–287 (ESKPTSELDQ…RLEEKYIGHI (260 aa)) are non-LT domain. The segment at 288–529 (GSFDYVDTRA…QATLTTEVQP (242 aa)) is LT domain. Residue Glu-332 is part of the active site. The interval 510 to 529 (EALSPDVGVSQATLTTEVQP) is disordered. Polar residues predominate over residues 519–529 (SQATLTTEVQP).

In the N-terminal section; belongs to the bacterial solute-binding protein 3 family. It in the C-terminal section; belongs to the transglycosylase Slt family.

The protein resides in the cell outer membrane. It carries out the reaction Exolytic cleavage of the (1-&gt;4)-beta-glycosidic linkage between N-acetylmuramic acid (MurNAc) and N-acetylglucosamine (GlcNAc) residues in peptidoglycan, from either the reducing or the non-reducing ends of the peptidoglycan chains, with concomitant formation of a 1,6-anhydrobond in the MurNAc residue.. Murein-degrading enzyme that degrades murein glycan strands and insoluble, high-molecular weight murein sacculi, with the concomitant formation of a 1,6-anhydromuramoyl product. Lytic transglycosylases (LTs) play an integral role in the metabolism of the peptidoglycan (PG) sacculus. Their lytic action creates space within the PG sacculus to allow for its expansion as well as for the insertion of various structures such as secretion systems and flagella. This chain is Membrane-bound lytic murein transglycosylase F, found in Vibrio vulnificus (strain CMCP6).